Consider the following 348-residue polypeptide: D-alanine--D-alanine ligase (348 aa).

One can recognise an ATP-grasp domain in the interval 136–344 (KSVFKSYNLP…LEKLVANLIE (209 aa)). 171–226 (NKIISYPCFIKPANLGSSVGITKAYSKEEFIAGIEFAAKYDERIIVEKSIEGRELE) is a binding site for ATP. Mg(2+)-binding residues include Asp297, Glu311, and Asn313.

It belongs to the D-alanine--D-alanine ligase family. The cofactor is Mg(2+). Requires Mn(2+) as cofactor.

It is found in the cytoplasm. It catalyses the reaction 2 D-alanine + ATP = D-alanyl-D-alanine + ADP + phosphate + H(+). The protein operates within cell wall biogenesis; peptidoglycan biosynthesis. In terms of biological role, cell wall formation. The protein is D-alanine--D-alanine ligase of Prochlorococcus marinus (strain NATL2A).